A 427-amino-acid polypeptide reads, in one-letter code: MKASDTGSAGVLAGKLSALLSYLRSFLPFMWKNFMQDRVLLSAGSLAFQTLLSLIPLMAVVLSVLSVSPVFETFKRYVDDFLFQNFVPASGSMIREYFWEFIGNTATVPTVGGIFLLIIALFLISTIDHTINQIWDVRAPRKILQGFTLYWTVLTLGPIIIGSGLVASSYVWYTVFTEGPFLELRTRILSYLPLVNSFLAFFLLYMLVPNHRVRFLHAVSGAFLATWLFELSKQWFSFYVKTFATFEHIYGALSVIPLLFFWIYLIWVVALSGAEFVYCLGAVRQEVKKERKEFSTLHGLWDVLAVMEQIWKGQQCGQYVRYKKHALSGKGIDAARVRSIVAVLKENRLIHVTEDGEFALHCDIHEVTLFDLYSILPPEILVGSDAAVSGKRFEQLYELEAAVAACLRESLDKPLALYIKQEEGLPE.

Helical transmembrane passes span 51-71, 107-127, 147-167, 188-208, 218-238, and 251-271; these read LLSL…SPVF, TVPT…ISTI, FTLY…GLVA, ILSY…YMLV, AVSG…WFSF, and GALS…VVAL.

Belongs to the UPF0761 family.

The protein resides in the cell inner membrane. The chain is UPF0761 membrane protein Cphamn1_1013 from Chlorobium phaeobacteroides (strain BS1).